Consider the following 498-residue polypeptide: Probable deoxyguanosinetriphosphate triphosphohydrolase (498 aa).

In terms of domain architecture, HD spans 71-262; that stretch reads RLTHSLEVQQ…MEAADDISYC (192 aa).

Belongs to the dGTPase family. Type 1 subfamily. It depends on Mg(2+) as a cofactor.

The catalysed reaction is dGTP + H2O = 2'-deoxyguanosine + triphosphate + H(+). Functionally, dGTPase preferentially hydrolyzes dGTP over the other canonical NTPs. The sequence is that of Probable deoxyguanosinetriphosphate triphosphohydrolase from Pseudomonas aeruginosa (strain ATCC 15692 / DSM 22644 / CIP 104116 / JCM 14847 / LMG 12228 / 1C / PRS 101 / PAO1).